Reading from the N-terminus, the 392-residue chain is MPALKIPLFKMKDMILILCLLKMSSAVPAFPQQPGIPGMASLSLETMRQLGSLQGLNLLSQYSRFGFGKSFNSLWMNGLLPPHSSFPWMRPREHETQQPSLQPQQPGQKPFLQPTVVTSMQNAVQKGVPQPPIYQGHPPLQQAEGPMVEQQVAPSEKPPTTELPGMDFADLQDPPMFPIAHLISRGPMPQNKPSQLYPGIFYVTYGANQLGGRGDPLAYGAIFPGFGGMRPRLGGMPHNPDMGGDFTLEFDSPVAATKGPEKGEGGAQDSPVPEAHLADPESPALLSELAPGALEGLLANPEGNIPNLARGPAGRSRGFLRGVTPAAADPLMTPGLAEVYETYGADETTTLGLQEETTVDSTATPDTQHTLMPRNKAQQPQIKHDAWHFQEP.

A signal peptide spans 1-26 (MPALKIPLFKMKDMILILCLLKMSSA). P37 carries the hydroxyproline modification. S43 is subject to Phosphoserine. 3 disordered regions span residues 86–109 (FPWM…PGQK), 247–280 (TLEF…LADP), and 349–392 (TTLG…FQEP). Over residues 97–109 (QQPSLQPQQPGQK) the composition is skewed to low complexity. Polar residues predominate over residues 359–381 (VDSTATPDTQHTLMPRNKAQQPQ). Positions 382–392 (IKHDAWHFQEP) are enriched in basic and acidic residues.

The protein belongs to the ameloblastin family.

It localises to the secreted. The protein resides in the extracellular space. The protein localises to the extracellular matrix. Involved in the mineralization and structural organization of enamel. The chain is Ameloblastin (AMBN) from Bos taurus (Bovine).